Reading from the N-terminus, the 276-residue chain is Biotin synthase (276 aa).

Positions 1–226 (MKKIYLCAIS…EAIIMLAGGR (226 aa)) constitute a Radical SAM core domain. [4Fe-4S] cluster is bound by residues Cys17, Cys21, and Cys24. Residues Cys61, Cys95, and Cys153 each contribute to the [2Fe-2S] cluster site.

The protein belongs to the radical SAM superfamily. Biotin synthase family. As to quaternary structure, homodimer. Requires [4Fe-4S] cluster as cofactor. [2Fe-2S] cluster serves as cofactor.

The enzyme catalyses (4R,5S)-dethiobiotin + (sulfur carrier)-SH + 2 reduced [2Fe-2S]-[ferredoxin] + 2 S-adenosyl-L-methionine = (sulfur carrier)-H + biotin + 2 5'-deoxyadenosine + 2 L-methionine + 2 oxidized [2Fe-2S]-[ferredoxin]. It participates in cofactor biosynthesis; biotin biosynthesis; biotin from 7,8-diaminononanoate: step 2/2. Catalyzes the conversion of dethiobiotin (DTB) to biotin by the insertion of a sulfur atom into dethiobiotin via a radical-based mechanism. In Nautilia profundicola (strain ATCC BAA-1463 / DSM 18972 / AmH), this protein is Biotin synthase.